The sequence spans 314 residues: tRNA dimethylallyltransferase (314 aa).

10 to 17 (GPTAVGKT) lines the ATP pocket. Residue 12 to 17 (TAVGKT) coordinates substrate. The segment at 35–38 (DSMQ) is interaction with substrate tRNA.

Belongs to the IPP transferase family. As to quaternary structure, monomer. Mg(2+) is required as a cofactor.

It carries out the reaction adenosine(37) in tRNA + dimethylallyl diphosphate = N(6)-dimethylallyladenosine(37) in tRNA + diphosphate. Catalyzes the transfer of a dimethylallyl group onto the adenine at position 37 in tRNAs that read codons beginning with uridine, leading to the formation of N6-(dimethylallyl)adenosine (i(6)A). This Clostridium novyi (strain NT) protein is tRNA dimethylallyltransferase.